Reading from the N-terminus, the 274-residue chain is Factor H binding protein (274 aa).

A signal peptide spans 1-19 (MNRTAFCCLSLTTALILTA). The N-palmitoyl cysteine moiety is linked to residue Cys20. A lipid anchor (S-diacylglycerol cysteine) is attached at Cys20. Residues 27–119 (VAADIGAGLA…LESGEFQVYK (93 aa)) are domain A. The segment at 120-183 (QSHSALTAFQ…TAFGSDDAGG (64 aa)) is domain B. A domain C region spans residues 184–274 (KLTYTIDFAA…IRHIGLAAKQ (91 aa)).

Belongs to the factor H binding-protein family. Binds to host factor H (fH from human). Both fHbp beta-barrels contact Sushi domains 6 and 7 in fH (also called complement control protein domains, CCP). This interaction probably mimics the normal (carbohydrate-dependent) mode of fH recruitement, regulating fH activity. Sucrose octasulphate inhibits the fHbp-fH interaction. Protein is lipidated in N.meningitidis upon growth in radioactive palmitic acid, probably on Cys-20.

The protein resides in the cell outer membrane. It localises to the secreted. It is found in the extracellular vesicle. Its subcellular location is the bacterial extracellular vesicle. A bacterial surface lipoprotein that binds host (human) complement factor H (fH, gene CFH), binding contributes to the avoidance of complement-mediated lysis by N.meningitidis. Binding of fH to the bacteria surface is independent of bacterial sialic acid moieties. fH binding affinity is high enough that it may sequester plasma fH, depleting its circulating levels and de-regulating complement in the host. This protein induces high levels of bactericidal antibodies in mice. This Neisseria meningitidis serogroup B (strain ATCC BAA-335 / MC58) protein is Factor H binding protein (fhbP).